A 640-amino-acid polypeptide reads, in one-letter code: Probable Ufm1-specific protease (640 aa).

Residues Cys-467, Asp-591, and His-593 contribute to the active site.

The protein belongs to the peptidase C78 family.

In terms of biological role, thiol protease which recognizes and hydrolyzes the peptide bond at the C-terminal Gly of ufm-1, a ubiquitin-like modifier protein bound to a number of target proteins. The sequence is that of Probable Ufm1-specific protease from Oryza sativa subsp. japonica (Rice).